The chain runs to 519 residues: Galactose-1-phosphate uridylyltransferase (519 aa).

Belongs to the galactose-1-phosphate uridylyltransferase type 2 family.

It localises to the cytoplasm. It carries out the reaction alpha-D-galactose 1-phosphate + UDP-alpha-D-glucose = alpha-D-glucose 1-phosphate + UDP-alpha-D-galactose. Its pathway is carbohydrate metabolism; galactose metabolism. In Caldanaerobacter subterraneus subsp. tengcongensis (strain DSM 15242 / JCM 11007 / NBRC 100824 / MB4) (Thermoanaerobacter tengcongensis), this protein is Galactose-1-phosphate uridylyltransferase.